The following is a 73-amino-acid chain: DNA-directed RNA polymerase subunit epsilon (73 aa).

The protein belongs to the RNA polymerase subunit epsilon family. RNAP is composed of a core of 2 alpha, a beta and a beta' subunit. The core is associated with a delta subunit, and at least one of epsilon or omega. When a sigma factor is associated with the core the holoenzyme is formed, which can initiate transcription.

The enzyme catalyses RNA(n) + a ribonucleoside 5'-triphosphate = RNA(n+1) + diphosphate. A non-essential component of RNA polymerase (RNAP). The sequence is that of DNA-directed RNA polymerase subunit epsilon from Lactobacillus acidophilus (strain ATCC 700396 / NCK56 / N2 / NCFM).